Reading from the N-terminus, the 1036-residue chain is Multiple C2 domain and transmembrane region protein 2 (1036 aa).

The C2 1 domain maps to 1–110 (MRNTTKLVVH…YKDDQVYQRF (110 aa)). Disordered regions lie at residues 137–204 (DQTF…PVQK) and 225–246 (RENP…HPQN). Residues 146-155 (PYTSPTQASA) are compositionally biased toward polar residues. Residues 158–168 (TEEDTADSETE) show a composition bias toward acidic residues. Residues 190 to 204 (VEGKKSEEVKEPVQK) are compositionally biased toward basic and acidic residues. 3 consecutive C2 domains span residues 277–399 (PNAG…PQWY), 440–563 (VHGE…SRWF), and 607–734 (YISD…THSF). 4 residues coordinate Ca(2+): Asp-316, Asp-364, Glu-366, and Asp-372. 2 helical membrane-spanning segments follow: residues 871 to 891 (FILV…MFFI) and 979 to 999 (LFIL…FKAI).

The protein belongs to the MCTP family. The cofactor is Ca(2+). In terms of tissue distribution, expressed in the vascular tissues of roots and rosette leaves. Accumulates in roots meristems. Observed in flowers.

It is found in the cell membrane. Functionally, may function as a signaling molecule by regulating the trafficking of other regulators. This Arabidopsis thaliana (Mouse-ear cress) protein is Multiple C2 domain and transmembrane region protein 2.